Consider the following 88-residue polypeptide: Small ribosomal subunit protein bS20 (88 aa).

Positions 1–27 are disordered; sequence MANSKSAKKRALQSEKRRQHNASRRSM.

The protein belongs to the bacterial ribosomal protein bS20 family.

Binds directly to 16S ribosomal RNA. This chain is Small ribosomal subunit protein bS20, found in Shewanella denitrificans (strain OS217 / ATCC BAA-1090 / DSM 15013).